We begin with the raw amino-acid sequence, 201 residues long: Large ribosomal subunit protein uL4 (201 aa).

The interval 45 to 71 (AQKTRAEVTGSGKKPWRQKGTGRARAG) is disordered.

This sequence belongs to the universal ribosomal protein uL4 family. Part of the 50S ribosomal subunit.

Its function is as follows. One of the primary rRNA binding proteins, this protein initially binds near the 5'-end of the 23S rRNA. It is important during the early stages of 50S assembly. It makes multiple contacts with different domains of the 23S rRNA in the assembled 50S subunit and ribosome. Forms part of the polypeptide exit tunnel. The chain is Large ribosomal subunit protein uL4 from Shewanella oneidensis (strain ATCC 700550 / JCM 31522 / CIP 106686 / LMG 19005 / NCIMB 14063 / MR-1).